Here is a 783-residue protein sequence, read N- to C-terminus: MSQEKNEMFESEWSKEREREKQLASGLDTAEKALKVESEELQKSKSELICLYNEVHNLPGESESKDHFLIACDLLQRENSELETKVLKLSQEFAQLNHFTLGGKTAPSNLITSENTCKDPESNEPILETEIQSRKEETEELCPKLGERKQKEIPEESVKEGSFPREGQKEEGSQQNRDMKDEEKEQQLTMKPEEIVRLREELSHINQSLLQSQSSGDSSDDSGAQHPSSGEKLKYNQQGEVQQLHQNLHRLQILCNSAENELRYERGQNLDLKQHNSLLQEENIKIKIELKHAQQKLLDSTKMCSSLTAEYKHCQQKIKELELEVLKHTQSIKSQNNLQEKLVQEKSKVADAEEKILDLQRKLEHAHKVCLTDTCISEKQQLEEKIKEATQNEAKVKQQYQEEQQKRKLLYQNVDELHRQVRTLQDKENLLEMTCSQQQSRIQQQEALLKQLENEKRKYDEHVKSNQELSEKLSKLQQEKEALREEYLRLLKLLNVHVRNYNEKHHQQKVKLQKVKYRLTNEVELRDKRINQFEDEIGILQHKIEKEKAIQDQITAQNDTLLLEKRKLQEQVIEQEQLIHSNKWTISSIQSRVLYMDKENKQLQENSLRLTQQIGFLERIIRSIHIRRGENLKEFPVPKWWHRGKLASLPPTKKQKEIYSTEVFTSNNAELQHEDESVPEATEKWKHSEQMETTISDILESEVVNEILPLSNSSFSGKGLVESFASLQETEEIKSKEAMASSKSPEKSPENLVCSQNSEAGYINVASLKETHGIQEQDQKSEL.

Over residues 1 to 22 (MSQEKNEMFESEWSKEREREKQ) the composition is skewed to basic and acidic residues. 3 disordered regions span residues 1-26 (MSQE…LASG), 101-191 (LGGK…LTMK), and 209-231 (LLQS…SSGE). Residues 22 to 98 (QLASGLDTAE…LSQEFAQLNH (77 aa)) adopt a coiled-coil conformation. Positions 106–115 (APSNLITSEN) are enriched in polar residues. The span at 131-191 (IQSRKEETEE…EEKEQQLTMK (61 aa)) shows a compositional bias: basic and acidic residues. 2 coiled-coil regions span residues 165-497 (REGQ…LNVH) and 527-622 (DKRI…RIIR). The interval 731 to 755 (EEIKSKEAMASSKSPEKSPENLVCS) is disordered.

This sequence belongs to the prefoldin subunit beta family. Expressed in brain, kidney, pancreas, placenta, liver, thymus and prostate.

This Homo sapiens (Human) protein is Coiled-coil domain-containing protein 30 (CCDC30).